An 803-amino-acid chain; its full sequence is H(+)/Cl(-) exchange transporter 7 (803 aa).

Positions 1-46 (MANVSKKVSWSGRDRDDEEGAPLLRRTGQPDEETPLLNGAGPGARQ) are disordered. Residues 1–124 (MANVSKKVSW…TAFRTVEIKR (124 aa)) are Cytoplasmic-facing. At serine 9 the chain carries Phosphoserine. 2 helical membrane-spanning segments follow: residues 125–157 (WVIC…YRVI) and 172–195 (FSLL…VAFI). The Selectivity filter part_1 signature appears at 201-205 (GSGIP). Serine 202 is a chloride binding site. The segment at residues 204–211 (IPQIKCFL) is an intramembrane region (helical). 2 consecutive transmembrane segments (helical) span residues 221 to 239 (RLKT…VVGG) and 245 to 262 (EGPM…ISQG). Residues 243-247 (GKEGP) carry the Selectivity filter part_2 motif. Intramembrane regions (helical) lie at residues 286–298 (FVSA…VSAA) and 302–310 (PVGGVLFSL). 5 consecutive transmembrane segments (helical) span residues 320–339 (FLTW…LNFV), 373–403 (IPVF…FRIR), 408–430 (PCLQ…FVLI), 485–505 (PMTL…TYGL), and 510–533 (GVFI…MSYL). Positions 510–514 (GVFIP) match the Selectivity filter part_3 motif. Phenylalanine 512 provides a ligand contact to chloride. Residues 543–557 (GKYALMGAAAQLGGI) constitute an intramembrane region (helical). Positions 558-560 (VRM) form an intramembrane region, note=Loop between two helices. The segment at residues 561–572 (TLSLTVIMMEAT) is an intramembrane region (helical). The note=Loop between two helices intramembrane region spans 573-576 (SNVT). A helical transmembrane segment spans residues 577 to 595 (YGFPIMLVLMTAKIVGDVF). Topologically, residues 596-803 (IEGLYDMHIQ…GLEELSLAQT (208 aa)) are cytoplasmic. Tyrosine 600 is a binding site for chloride. 2 CBS domains span residues 629 to 693 (MSTP…VFVE) and 739 to 797 (MNPS…GLEE). ATP contacts are provided by residues 656 to 658 (HNG) and 781 to 784 (TRKD). Serine 799 is modified (phosphoserine).

It belongs to the chloride channel (TC 2.A.49) family. ClC-7/CLCN7 subfamily. As to quaternary structure, chloride channel 7 are heteromers of alpha (CLCN7) and beta (OSTM1) subunits. Brain, testis, muscle and kidney.

The protein resides in the lysosome membrane. The enzyme catalyses 2 chloride(in) + H(+)(out) = 2 chloride(out) + H(+)(in). In terms of biological role, slowly voltage-gated channel mediating the exchange of chloride ions against protons. Functions as antiporter and contributes to the acidification of the lysosome lumen and may be involved in maintaining lysosomal pH. The CLC channel family contains both chloride channels and proton-coupled anion transporters that exchange chloride or another anion for protons. The presence of conserved gating glutamate residues is typical for family members that function as antiporters. In Rattus norvegicus (Rat), this protein is H(+)/Cl(-) exchange transporter 7 (Clcn7).